A 902-amino-acid chain; its full sequence is Auxin response factor 5 (902 aa).

Residues 158–260 (FCKTLTASDT…QLMVGVRRAN (103 aa)) constitute a DNA-binding region (TF-B3). The segment at 497 to 543 (SEMVQPQNKLTVNPSASNTSGQEQNLSQSMSAPAKPENSTLSGCSSG) is disordered. The region spanning 793-877 (RTYTKVQKTG…RCIRILSPTE (85 aa)) is the PB1 domain.

It belongs to the ARF family. In terms of assembly, homodimers and heterodimers. Interacts with BRX and the auxin-responsive proteins IAA1, IAA12 (BODENLOS), IAA17 and ARF7. Expressed in the whole plant with a lower expression in leaves. Detected in embryo axis, provascular tissues, procambium and some differentiated vascular regions of mature organs.

It localises to the nucleus. Auxin response factors (ARFs) are transcriptional factors that bind specifically to the DNA sequence 5'-TGTCTC-3' found in the auxin-responsive promoter elements (AuxREs). Seems to act as transcriptional activator. Formation of heterodimers with Aux/IAA proteins may alter their ability to modulate early auxin response genes expression. Mediates embryo axis formation and vascular tissues differentiation. Functionally redundant with ARF7. May be necessary to counteract AMP1 activity. The sequence is that of Auxin response factor 5 (ARF5) from Arabidopsis thaliana (Mouse-ear cress).